The following is a 368-amino-acid chain: tRNA-specific 2-thiouridylase MnmA (368 aa).

ATP contacts are provided by residues 11 to 18 and Met37; that span reads GMSGGVDS. The interval 97 to 99 is interaction with target base in tRNA; it reads NPD. The Nucleophile role is filled by Cys102. Cys102 and Cys199 are joined by a disulfide. An ATP-binding site is contributed by Gly127. Residues 149-151 form an interaction with tRNA region; that stretch reads KDQ. The active-site Cysteine persulfide intermediate is the Cys199. The interaction with tRNA stretch occupies residues 311 to 312; the sequence is RY.

Belongs to the MnmA/TRMU family.

It is found in the cytoplasm. The catalysed reaction is S-sulfanyl-L-cysteinyl-[protein] + uridine(34) in tRNA + AH2 + ATP = 2-thiouridine(34) in tRNA + L-cysteinyl-[protein] + A + AMP + diphosphate + H(+). Its function is as follows. Catalyzes the 2-thiolation of uridine at the wobble position (U34) of tRNA, leading to the formation of s(2)U34. This Baumannia cicadellinicola subsp. Homalodisca coagulata protein is tRNA-specific 2-thiouridylase MnmA.